Consider the following 421-residue polypeptide: Cyclin-A1 (421 aa).

Residues 1–21 form a disordered region; the sequence is MHRQSSKSGVALPPVGQGPDA.

Belongs to the cyclin family. Cyclin AB subfamily. In terms of assembly, interacts with INCA1 and KLHDC9. Interacts with the CDK2 and CDC2 protein kinases to form a serine/threonine kinase holoenzyme complex. The cyclin subunit imparts substrate specificity to the complex. Found in a complex with CDK2, CABLES1 and CCNE1. Post-translationally, polyubiquitinated via 'Lys-11'-linked ubiquitin by the anaphase-promoting complex (APC/C), leading to its degradation by the proteasome. Deubiquitinated and stabilized by USP37 enables entry into S phase. Ubiquitinated during the G1 phase by the SCF(FBXO31) complex, leading to its proteasomal degradation. In terms of tissue distribution, testis and ovaries.

It localises to the nucleus. The protein localises to the cytoplasm. It is found in the cytoskeleton. The protein resides in the spindle. May be involved in the control of the cell cycle at the G1/S (start) and G2/M (mitosis) transitions. May primarily function in the control of the germline meiotic cell cycle and additionally in the control of mitotic cell cycle in some somatic cells. This is Cyclin-A1 (Ccna1) from Mus musculus (Mouse).